The chain runs to 244 residues: Putative B3 domain-containing protein At2g31460 (244 aa).

The TF-B3 DNA-binding region spans 49–147; that stretch reads SSMHMENSGF…PVHDGVNLSG (99 aa). 2 disordered regions span residues 175–196 and 217–244; these read DGNLPQDSGHDGHNDNLPQDSV and DSQGYLPDEDEDFGFNDDGSIRDSGHYQ. Positions 235–244 are enriched in basic and acidic residues; sequence GSIRDSGHYQ.

The protein localises to the nucleus. The chain is Putative B3 domain-containing protein At2g31460 from Arabidopsis thaliana (Mouse-ear cress).